The primary structure comprises 335 residues: Glucose-dependent insulinotropic receptor (335 aa).

Residues 1 to 12 lie on the Extracellular side of the membrane; that stretch reads MESSFSFGVILA. Residues 13 to 33 traverse the membrane as a helical segment; the sequence is VLASLIIATNTLVAVAVLLLI. The Cytoplasmic segment spans residues 34-37; it reads HKND. Residues 38–58 form a helical membrane-spanning segment; the sequence is GVSLCFTLNLAVADTLIGVAI. Residues 59-81 are Extracellular-facing; sequence SGLLTDQLSSPSRPTQKTLCSLR. The chain crosses the membrane as a helical span at residues 82–102; that stretch reads MAFVTSSAAASVLTVMLITFD. At 103–125 the chain is on the cytoplasmic side; that stretch reads RYLAIKQPFRYLKIMSGFVAGAC. A helical membrane pass occupies residues 126 to 146; that stretch reads IAGLWLVSYLIGFLPLGIPMF. The Extracellular segment spans residues 147–164; sequence QQTAYKGQCSFFAVFHPH. A helical membrane pass occupies residues 165 to 185; sequence FVLTLSCVGFFPAMLLFVFFY. Over 186-226 the chain is Cytoplasmic; that stretch reads CDMLKIASMHSQQIRKMEHAGAMAGGYRSPRTPSDFKALRT. Residues 227–247 form a helical membrane-spanning segment; it reads VSVLIGSFALSWTPFLITGIV. The Extracellular segment spans residues 248-262; sequence QVACQECHLYLVLER. Residues 263-283 traverse the membrane as a helical segment; the sequence is YLWLLGVGNSLLNPLIYAYWQ. At 284–335 the chain is on the cytoplasmic side; that stretch reads KEVRLQLYHMALGVKKVLTSFLLFLSARNCGPERPRESSCHIVTISSSEFDG.

It belongs to the G-protein coupled receptor 1 family. In terms of tissue distribution, predominantly expressed in the pancreas, especially in the islets.

Its subcellular location is the cell membrane. Functionally, receptor for the endogenous fatty-acid ethanolamide oleoylethanolamide (OEA) and lysophosphatidylcholine (LPC). Functions as a glucose-dependent insulinotropic receptor. The activity of this receptor is mediated by G proteins which activate adenylate cyclase. Seems to act through a G(s) mediated pathway. In Homo sapiens (Human), this protein is Glucose-dependent insulinotropic receptor (GPR119).